The following is a 1018-amino-acid chain: Collagen, type I, alpha 1a (1018 aa).

Positions Q1–S10 are enriched in basic and acidic residues. A disordered region spans residues Q1–Q991. Residues M13–S30 are compositionally biased toward pro residues. Residues P31 to R58 are compositionally biased toward low complexity. Basic and acidic residues predominate over residues N67–E81. The span at P126–A136 shows a compositional bias: low complexity. Over residues P138–P151 the composition is skewed to pro residues. Over residues G152–G170 the composition is skewed to gly residues. Composition is skewed to low complexity over residues P171–P214 and S223–V261. Residues G284–G296 show a composition bias toward gly residues. 4 stretches are compositionally biased toward low complexity: residues V370–K385, A424–Q442, L452–P510, and R543–T558. Residues G568 to G577 are compositionally biased toward gly residues. 2 stretches are compositionally biased toward low complexity: residues A591–T627 and P641–V663. Pro residues predominate over residues P665–P677. 2 stretches are compositionally biased toward low complexity: residues E701–G746 and P775–S795. Pro residues predominate over residues A819–V829. The span at P843–P862 shows a compositional bias: low complexity. Residues R865–E876 are compositionally biased toward basic and acidic residues. Over residues S889–P925 the composition is skewed to low complexity. The Fibrillar collagen NC1 domain occupies G932–K1018. Residues K948 to E959 are compositionally biased toward basic and acidic residues. Over residues T963–Q973 the composition is skewed to polar residues.

It belongs to the fibrillar collagen family.

The protein resides in the secreted. It localises to the extracellular space. It is found in the extracellular matrix. The protein is Collagen, type I, alpha 1a of Epinephelus costae (Goldblotch grouper).